Reading from the N-terminus, the 81-residue chain is Photosystem I iron-sulfur center (81 aa).

2 4Fe-4S ferredoxin-type domains span residues 2-31 (SHSV…MIPW) and 39-68 (IASA…VRVY). The [4Fe-4S] cluster site is built by cysteine 11, cysteine 14, cysteine 17, cysteine 21, cysteine 48, cysteine 51, cysteine 54, and cysteine 58.

As to quaternary structure, the eukaryotic PSI reaction center is composed of at least 11 subunits. Requires [4Fe-4S] cluster as cofactor.

It localises to the plastid. Its subcellular location is the chloroplast thylakoid membrane. It catalyses the reaction reduced [plastocyanin] + hnu + oxidized [2Fe-2S]-[ferredoxin] = oxidized [plastocyanin] + reduced [2Fe-2S]-[ferredoxin]. Apoprotein for the two 4Fe-4S centers FA and FB of photosystem I (PSI); essential for photochemical activity. FB is the terminal electron acceptor of PSI, donating electrons to ferredoxin. The C-terminus interacts with PsaA/B/D and helps assemble the protein into the PSI complex. Required for binding of PsaD and PsaE to PSI. PSI is a plastocyanin-ferredoxin oxidoreductase, converting photonic excitation into a charge separation, which transfers an electron from the donor P700 chlorophyll pair to the spectroscopically characterized acceptors A0, A1, FX, FA and FB in turn. This Phalaenopsis aphrodite subsp. formosana (Moth orchid) protein is Photosystem I iron-sulfur center.